The primary structure comprises 324 residues: RING-H2 finger protein ATL3 (324 aa).

Residues 24 to 44 (IILTAIIVLFMAVLFVLILHL) form a helical membrane-spanning segment. The RING-type; atypical zinc finger occupies 127-169 (CSICLSELVKGDKARLLPKCNHSFHVECIDMWFQSHSTCPICR). 3 disordered regions span residues 179-210 (SSKR…STSS), 226-248 (VSTG…ASQS), and 299-324 (RDKR…SVDP). Composition is skewed to polar residues over residues 192-210 (NAGT…STSS) and 226-235 (VSTGNTNVGT). Residues 306–324 (SNSSTSNSSSSNAVASVDP) show a composition bias toward low complexity.

The protein belongs to the RING-type zinc finger family. ATL subfamily.

It is found in the membrane. The catalysed reaction is S-ubiquitinyl-[E2 ubiquitin-conjugating enzyme]-L-cysteine + [acceptor protein]-L-lysine = [E2 ubiquitin-conjugating enzyme]-L-cysteine + N(6)-ubiquitinyl-[acceptor protein]-L-lysine.. Its pathway is protein modification; protein ubiquitination. This chain is RING-H2 finger protein ATL3 (ATL3), found in Arabidopsis thaliana (Mouse-ear cress).